The sequence spans 602 residues: Arginine--tRNA ligase (602 aa).

The 'HIGH' region motif lies at 138-148; that stretch reads ANPTGPMHVGH.

The protein belongs to the class-I aminoacyl-tRNA synthetase family. In terms of assembly, monomer.

It localises to the cytoplasm. It catalyses the reaction tRNA(Arg) + L-arginine + ATP = L-arginyl-tRNA(Arg) + AMP + diphosphate. The chain is Arginine--tRNA ligase from Gluconobacter oxydans (strain 621H) (Gluconobacter suboxydans).